A 707-amino-acid chain; its full sequence is Elongation factor G (707 aa).

The 290-residue stretch at Glu8 to Leu297 folds into the tr-type G domain. GTP-binding positions include Ala17–Thr24, Asp96–His100, and Asn150–Asp153.

It belongs to the TRAFAC class translation factor GTPase superfamily. Classic translation factor GTPase family. EF-G/EF-2 subfamily.

It is found in the cytoplasm. Its function is as follows. Catalyzes the GTP-dependent ribosomal translocation step during translation elongation. During this step, the ribosome changes from the pre-translocational (PRE) to the post-translocational (POST) state as the newly formed A-site-bound peptidyl-tRNA and P-site-bound deacylated tRNA move to the P and E sites, respectively. Catalyzes the coordinated movement of the two tRNA molecules, the mRNA and conformational changes in the ribosome. This chain is Elongation factor G, found in Gloeobacter violaceus (strain ATCC 29082 / PCC 7421).